The chain runs to 181 residues: Glucose-1-phosphate adenylyltransferase large subunit 2 (181 aa).

It belongs to the bacterial/plant glucose-1-phosphate adenylyltransferase family. In terms of assembly, heterotetramer. Leaves.

Its subcellular location is the plastid. It localises to the chloroplast. It is found in the amyloplast. It carries out the reaction alpha-D-glucose 1-phosphate + ATP + H(+) = ADP-alpha-D-glucose + diphosphate. The protein operates within glycan biosynthesis; starch biosynthesis. With respect to regulation, highly active without 3'phosphoglycerate, and is only slightly affected by the activator 3'phosphoglycerate and inhibitor orthophosphate. In terms of biological role, this protein plays a role in synthesis of starch. It catalyzes the synthesis of the activated glycosyl donor, ADP-glucose from Glc-1-P and ATP. The sequence is that of Glucose-1-phosphate adenylyltransferase large subunit 2 from Hordeum vulgare (Barley).